The following is an 833-amino-acid chain: EF-hand domain-containing family member B (833 aa).

EF-hand domains lie at 561-596 (QKFD…ANLS) and 597-632 (LDDK…KDKM). Residues Asp574, Asp578, Met580, Glu585, Asp610, Asp612, Asp614, and Glu621 each contribute to the Ca(2+) site.

As to quaternary structure, microtubule inner protein component of sperm flagellar doublet microtubules. Interacts with STIM1 and ORAI1; the interactions take place upon Ca(2+)-store depletion and dissociate through a Ca(2+)-dependent mechanism. Interaction with STIM1 inhibits STIM1 interaction with SARAF. In terms of tissue distribution, expressed in airway epithelial cells.

Its subcellular location is the cytoplasm. It localises to the cytoskeleton. The protein resides in the cilium axoneme. The protein localises to the flagellum axoneme. In terms of biological role, microtubule inner protein (MIP) part of the dynein-decorated doublet microtubules (DMTs) in cilia axoneme, which is required for motile cilia beating. Cytosolic sensor for calcium, modulates the interaction of STIM1 and ORAI1 upon store depletion and the activation of store-operated Ca(2+) entry (SOCE) and NFAT translocation from cytosol to nucleus. In Homo sapiens (Human), this protein is EF-hand domain-containing family member B.